The following is a 229-amino-acid chain: MAEKKAEKRAEKRKFNTEAWEPKTQIGRMVKEGTISDINYIMDKGLPLLEPEIVDALLPDLEEQVLDVKLVQRMHKSGRRARYRATVVVGNKNGYVGVGMGKSKEVGPAIRKAIAHAKLSLIKVRVGCGSWECGCGSPHSIPFTAKGACGSVKVELLPAPRGVGLVAGNVAKAVLGLAGIKDAWTKTFGDTRTTYNFAEATFDALNNLNFVRCLPAQKEKLGLTEGRVL.

The region spanning 61 to 124 is the S5 DRBM domain; the sequence is LEEQVLDVKL…AHAKLSLIKV (64 aa).

It belongs to the universal ribosomal protein uS5 family. In terms of assembly, part of the 30S ribosomal subunit. Contacts protein S4.

With S4 and S12 plays an important role in translational accuracy. The chain is Small ribosomal subunit protein uS5 from Methanococcus maripaludis (strain C6 / ATCC BAA-1332).